Here is a 1420-residue protein sequence, read N- to C-terminus: Putative mediator of RNA polymerase II transcription subunit 14 (1420 aa).

Positions methionine 1 to glutamine 43 form a coiled coil. 2 stretches are compositionally biased toward low complexity: residues methionine 1 to glutamine 43 and threonine 449 to asparagine 474. Disordered stretches follow at residues methionine 1–isoleucine 59, threonine 449–serine 490, glutamine 750–asparagine 799, and glutamine 1389–arginine 1420. Polar residues predominate over residues glycine 475–serine 490. Low complexity-rich tracts occupy residues asparagine 755–asparagine 795 and glutamine 1389–glutamine 1406. Residues leucine 1382–phenylalanine 1412 adopt a coiled-coil conformation. The span at isoleucine 1407–arginine 1420 shows a compositional bias: polar residues.

Belongs to the Mediator complex subunit 14 family. As to quaternary structure, component of the Mediator complex.

It is found in the nucleus. In terms of biological role, component of the Mediator complex, a coactivator involved in the regulated transcription of nearly all RNA polymerase II-dependent genes. Mediator functions as a bridge to convey information from gene-specific regulatory proteins to the basal RNA polymerase II transcription machinery. Mediator is recruited to promoters by direct interactions with regulatory proteins and serves as a scaffold for the assembly of a functional preinitiation complex with RNA polymerase II and the general transcription factors. The sequence is that of Putative mediator of RNA polymerase II transcription subunit 14 (med14) from Dictyostelium discoideum (Social amoeba).